Here is a 276-residue protein sequence, read N- to C-terminus: Sec-independent protein translocase protein TatC (276 aa).

The segment at Met-1–Lys-29 is disordered. A run of 6 helical transmembrane segments spans residues Gly-49–Leu-69, Leu-103–Thr-123, Gly-136–Leu-156, Leu-187–Ala-207, Trp-221–Thr-241, and Met-242–Trp-262.

This sequence belongs to the TatC family. The Tat system comprises two distinct complexes: a TatABC complex, containing multiple copies of TatA, TatB and TatC subunits, and a separate TatA complex, containing only TatA subunits. Substrates initially bind to the TatABC complex, which probably triggers association of the separate TatA complex to form the active translocon.

The protein localises to the cell membrane. Part of the twin-arginine translocation (Tat) system that transports large folded proteins containing a characteristic twin-arginine motif in their signal peptide across membranes. Together with TatB, TatC is part of a receptor directly interacting with Tat signal peptides. This chain is Sec-independent protein translocase protein TatC, found in Xylanimonas cellulosilytica (strain DSM 15894 / JCM 12276 / CECT 5975 / KCTC 9989 / LMG 20990 / NBRC 107835 / XIL07).